The chain runs to 137 residues: ATP synthase epsilon chain (137 aa).

Belongs to the ATPase epsilon chain family. As to quaternary structure, F-type ATPases have 2 components, CF(1) - the catalytic core - and CF(0) - the membrane proton channel. CF(1) has five subunits: alpha(3), beta(3), gamma(1), delta(1), epsilon(1). CF(0) has three main subunits: a, b and c.

The protein localises to the cell inner membrane. Its function is as follows. Produces ATP from ADP in the presence of a proton gradient across the membrane. This Pseudoalteromonas atlantica (strain T6c / ATCC BAA-1087) protein is ATP synthase epsilon chain.